A 322-amino-acid polypeptide reads, in one-letter code: UDP-N-acetylenolpyruvoylglucosamine reductase (322 aa).

Residues 36 to 202 (RAGGPAQVLF…TSVLFEGVPG (167 aa)) enclose the FAD-binding PCMH-type domain. Arg182 is an active-site residue. Ser231 acts as the Proton donor in catalysis. Residue Glu301 is part of the active site.

This sequence belongs to the MurB family. The cofactor is FAD.

The protein localises to the cytoplasm. The enzyme catalyses UDP-N-acetyl-alpha-D-muramate + NADP(+) = UDP-N-acetyl-3-O-(1-carboxyvinyl)-alpha-D-glucosamine + NADPH + H(+). It functions in the pathway cell wall biogenesis; peptidoglycan biosynthesis. Cell wall formation. This is UDP-N-acetylenolpyruvoylglucosamine reductase from Brucella abortus (strain S19).